A 98-amino-acid polypeptide reads, in one-letter code: Citrate lyase acyl carrier protein 1 (98 aa).

S14 carries the post-translational modification O-(phosphoribosyl dephospho-coenzyme A)serine.

The protein belongs to the CitD family. Oligomer with a subunit composition of (alpha,beta,gamma)6.

The protein localises to the cytoplasm. Covalent carrier of the coenzyme of citrate lyase. In Salmonella paratyphi A (strain ATCC 9150 / SARB42), this protein is Citrate lyase acyl carrier protein 1.